An 82-amino-acid polypeptide reads, in one-letter code: uncharacterized protein (82 aa).

This is an uncharacterized protein from Escherichia coli (strain K12).